The sequence spans 185 residues: Ribosome-recycling factor (185 aa).

Residues 136-161 (MDSLKTDEKKGEIGEDDRKRRETEVQ) form a disordered region.

This sequence belongs to the RRF family.

It localises to the cytoplasm. Responsible for the release of ribosomes from messenger RNA at the termination of protein biosynthesis. May increase the efficiency of translation by recycling ribosomes from one round of translation to another. This chain is Ribosome-recycling factor, found in Rhizorhabdus wittichii (strain DSM 6014 / CCUG 31198 / JCM 15750 / NBRC 105917 / EY 4224 / RW1) (Sphingomonas wittichii).